We begin with the raw amino-acid sequence, 304 residues long: Probable UDP-3-O-acylglucosamine N-acyltransferase 2, mitochondrial (304 aa).

Residues 1–47 constitute a mitochondrion transit peptide; sequence MAATLWRLYSKSICNSLQGIILNKPFIQKQLLLSSRTRSLSFSSDSQ. Residue 159 to 161 participates in UDP-N-acetyl-alpha-D-glucosamine binding; it reads FGF. 2 residues coordinate hexadecanoate: aspartate 209 and glutamine 213. The Proton acceptor role is filled by histidine 216. UDP-N-acetyl-alpha-D-glucosamine is bound by residues asparagine 217, serine 235, and histidine 253.

Belongs to the transferase hexapeptide repeat family. LpxD subfamily. Homotrimer.

It is found in the mitochondrion. It catalyses the reaction a UDP-3-O-[(3R)-3-hydroxyacyl]-alpha-D-glucosamine + a (3R)-hydroxyacyl-[ACP] = a UDP-2-N,3-O-bis[(3R)-3-hydroxyacyl]-alpha-D-glucosamine + holo-[ACP] + H(+). It participates in glycolipid biosynthesis; lipid IV(A) biosynthesis; lipid IV(A) from (3R)-3-hydroxytetradecanoyl-[acyl-carrier-protein] and UDP-N-acetyl-alpha-D-glucosamine: step 3/6. Functionally, involved in the biosynthesis of lipid A, a phosphorylated glycolipid that in bacteria anchors the lipopolysaccharide to the outer membrane of the cell. Lipid A-like molecules in plants may serve as structural components of the outer membranes of mitochondria and/or chloroplasts, or may be involved in signal transduction or plant defense responses. The sequence is that of Probable UDP-3-O-acylglucosamine N-acyltransferase 2, mitochondrial (LPXD2) from Arabidopsis thaliana (Mouse-ear cress).